Consider the following 112-residue polypeptide: Large ribosomal subunit protein eL30 (112 aa).

The protein belongs to the eukaryotic ribosomal protein eL30 family.

In Lupinus luteus (European yellow lupine), this protein is Large ribosomal subunit protein eL30 (RPL30).